Here is a 795-residue protein sequence, read N- to C-terminus: uncharacterized protein (795 aa).

A coiled-coil region spans residues 228 to 280; the sequence is NIICFKNKCKNNEKEKKEEEEDHDHDHDDKKKEKEDKEKEEEEEEEDSNDDFE. Disordered regions lie at residues 242 to 278, 326 to 430, 455 to 484, and 673 to 743; these read EKKEEEEDHDHDHDDKKKEKEDKEKEEEEEEEDSNDD, TTTT…TPNR, INQQQQQQQQQQSSTSPSISPSSSNIKSEP, and NNNN…NENE. Positions 251–264 are enriched in basic and acidic residues; it reads DHDHDDKKKEKEDK. Residues 265 to 278 are compositionally biased toward acidic residues; the sequence is EKEEEEEEEDSNDD. The segment covering 326 to 345 has biased composition (low complexity); sequence TTTTTVNGSKNSSNTTTPIT. The span at 362-373 shows a compositional bias: acidic residues; that stretch reads DDDDDDDLTDED. The span at 377-398 shows a compositional bias: polar residues; sequence HNEIYSTSPKVSHSTFCQSSPT. Composition is skewed to low complexity over residues 399-414, 455-480, and 673-729; these read LLDLDLQQQQQQQQQQ, INQQQQQQQQQQSSTSPSISPSSSNI, and NNNN…NQNE. A compositionally biased stretch (basic and acidic residues) spans 732–743; it reads NENKNENENENE.

This is an uncharacterized protein from Dictyostelium discoideum (Social amoeba).